Consider the following 360-residue polypeptide: Nucleoporin SEH1-B (360 aa).

WD repeat units lie at residues 10 to 49 (DHKD…NWHC), 55 to 96 (THSG…SNDK), 111 to 152 (DSRT…NLSQ), 160 to 210 (SCKL…RKYA), 217 to 258 (SVSD…KELS), and 276 to 315 (NHNS…NWKC).

Belongs to the WD repeat SEC13 family. In terms of assembly, component of the Nup107-160 subcomplex of the nuclear pore complex (NPC). The Nup107-160 subcomplex includes NUP160, NUP133, NUP107, NUP98, NUP85, NUP43, NUP37, SEH1 and SEC13. Component of the GATOR2 subcomplex, composed of MIOS, SEC13, SEH1L, WDR24 and WDR59. The GATOR2 complex interacts with CASTOR1 and CASTOR2; the interaction is negatively regulated by arginine. The GATOR2 complex interacts with SESN1, SESN2 and SESN3; the interaction is negatively regulated by amino acids.

The protein localises to the chromosome. It is found in the centromere. Its subcellular location is the kinetochore. It localises to the nucleus. The protein resides in the nuclear pore complex. The protein localises to the lysosome membrane. The GATOR2 complex is negatively regulated by the upstream amino acid sensors CASTOR1 and SESN2, which sequester the GATOR2 complex in absence of amino acids. In the presence of abundant amino acids, GATOR2 is released from CASTOR1 and SESN2 and activated. Component of the Nup107-160 subcomplex of the nuclear pore complex (NPC). The Nup107-160 subcomplex is required for the assembly of a functional NPC. The Nup107-160 subcomplex is also required for normal kinetochore microtubule attachment, mitotic progression and chromosome segregation. This subunit plays a role in recruitment of the Nup107-160 subcomplex to the kinetochore. In terms of biological role, as a component of the GATOR2 complex, functions as an activator of the amino acid-sensing branch of the mTORC1 signaling pathway. The GATOR2 complex indirectly activates mTORC1 through the inhibition of the GATOR1 subcomplex. GATOR2 probably acts as an E3 ubiquitin-protein ligase toward GATOR1. In the presence of abundant amino acids, the GATOR2 complex mediates ubiquitination of the NPRL2 core component of the GATOR1 complex, leading to GATOR1 inactivation. In the absence of amino acids, GATOR2 is inhibited, activating the GATOR1 complex. The sequence is that of Nucleoporin SEH1-B (seh1l-b) from Xenopus laevis (African clawed frog).